Here is a 417-residue protein sequence, read N- to C-terminus: Dibenzothiophene monooxygenase (417 aa).

The segment at 19 to 125 (DPVAVARGLA…LYTQIAQNNW (107 aa)) is helical N-terminus. Residues Tyr-96, 129–134 (NASSEN), 159–163 (KHFCS), Arg-282, 369–370 (AR), and His-391 each bind FMN. Residues 126-234 (WTGNASSENN…VEPDEVLGAP (109 aa)) form a central beta-barrel N-terminus region. Residues 131–142 (SSENNSHELDVK) form a lid loop region. The tract at residues 235 to 409 (NAFVLAFIQS…DVGKHTLNGQ (175 aa)) is helical C-terminus.

It belongs to the DszC flavin monooxygenase family. In terms of assembly, homotetramer.

Its subcellular location is the cytoplasm. The enzyme catalyses dibenzothiophene + 2 FMNH2 + 2 O2 = dibenzothiophene 5,5-dioxide + 2 FMN + 2 H2O + 2 H(+). It carries out the reaction dibenzothiophene + FMNH2 + O2 = dibenzothiophene 5-oxide + FMN + H2O + H(+). The catalysed reaction is dibenzothiophene 5-oxide + FMNH2 + O2 = dibenzothiophene 5,5-dioxide + FMN + H2O + H(+). It functions in the pathway sulfur metabolism; dibenzothiophene degradation. Catalyzes the first step of the '4S' desulfurization pathway that removes covalently bound sulfur from dibenzothiophene (DBT) without breaking carbon-carbon bonds. Sulfur dioxygenase which converts DBT to DBT-sulfone (DBTO2 or DBT 5,5-dioxide) in a stepwise manner. This Rhodococcus erythropolis (Arthrobacter picolinophilus) protein is Dibenzothiophene monooxygenase.